Consider the following 366-residue polypeptide: tRNA/tmRNA (uracil-C(5))-methyltransferase (366 aa).

Positions 190, 218, 223, 239, and 299 each coordinate S-adenosyl-L-methionine. Catalysis depends on Cys-324, which acts as the Nucleophile. Residue Glu-358 is the Proton acceptor of the active site.

The protein belongs to the class I-like SAM-binding methyltransferase superfamily. RNA M5U methyltransferase family. TrmA subfamily.

It catalyses the reaction uridine(54) in tRNA + S-adenosyl-L-methionine = 5-methyluridine(54) in tRNA + S-adenosyl-L-homocysteine + H(+). It carries out the reaction uridine(341) in tmRNA + S-adenosyl-L-methionine = 5-methyluridine(341) in tmRNA + S-adenosyl-L-homocysteine + H(+). In terms of biological role, dual-specificity methyltransferase that catalyzes the formation of 5-methyluridine at position 54 (m5U54) in all tRNAs, and that of position 341 (m5U341) in tmRNA (transfer-mRNA). The sequence is that of tRNA/tmRNA (uracil-C(5))-methyltransferase from Citrobacter koseri (strain ATCC BAA-895 / CDC 4225-83 / SGSC4696).